A 745-amino-acid chain; its full sequence is Phosphoribosylformylglycinamidine synthase subunit PurL (745 aa).

His54 is an active-site residue. 2 residues coordinate ATP: Tyr57 and Lys96. Glu98 serves as a coordination point for Mg(2+). Substrate is bound by residues 99-102 (SHNH) and Arg121. His100 functions as the Proton acceptor in the catalytic mechanism. Position 122 (Asp122) interacts with Mg(2+). Gln250 contributes to the substrate binding site. A Mg(2+)-binding site is contributed by Asp278. 322–324 (ESQ) is a binding site for substrate. The ATP site is built by Asp503 and Gly540. Position 541 (Asn541) interacts with Mg(2+). Ser543 is a binding site for substrate.

It belongs to the FGAMS family. Monomer. Part of the FGAM synthase complex composed of 1 PurL, 1 PurQ and 2 PurS subunits.

The protein localises to the cytoplasm. It catalyses the reaction N(2)-formyl-N(1)-(5-phospho-beta-D-ribosyl)glycinamide + L-glutamine + ATP + H2O = 2-formamido-N(1)-(5-O-phospho-beta-D-ribosyl)acetamidine + L-glutamate + ADP + phosphate + H(+). The protein operates within purine metabolism; IMP biosynthesis via de novo pathway; 5-amino-1-(5-phospho-D-ribosyl)imidazole from N(2)-formyl-N(1)-(5-phospho-D-ribosyl)glycinamide: step 1/2. In terms of biological role, part of the phosphoribosylformylglycinamidine synthase complex involved in the purines biosynthetic pathway. Catalyzes the ATP-dependent conversion of formylglycinamide ribonucleotide (FGAR) and glutamine to yield formylglycinamidine ribonucleotide (FGAM) and glutamate. The FGAM synthase complex is composed of three subunits. PurQ produces an ammonia molecule by converting glutamine to glutamate. PurL transfers the ammonia molecule to FGAR to form FGAM in an ATP-dependent manner. PurS interacts with PurQ and PurL and is thought to assist in the transfer of the ammonia molecule from PurQ to PurL. The chain is Phosphoribosylformylglycinamidine synthase subunit PurL from Helicobacter hepaticus (strain ATCC 51449 / 3B1).